The chain runs to 261 residues: Mannose-specific lectin 2 (261 aa).

Residues 1–23 form the signal peptide; the sequence is MAKLLLFLLPAILGLLIPRSAVA. 2 Bulb-type lectin domains span residues 26–131 and 145–252; these read TNYL…PWVP and DNLL…SKRS. Residues 51–55, Tyr59, Trp63, Gln64, 170–174, Tyr178, and 182–185 contribute to the beta-D-mannose site; these read QNDCN, QGDCN, and YGWQ. Positions 51-59 match the Carbohydrate-binding motif 1 motif; the sequence is QNDCNLVLY. 2 disulfides stabilise this stretch: Cys54–Cys74 and Cys173–Cys195. The Carbohydrate-binding motif 2 motif lies at 170-178; sequence QGDCNLVLY.

In terms of assembly, forms heterotetramer of 2 chains 1 and 2 chains 2 arranged as a dimer of chain 1 and chain 2 heterodimers.

Mannose-specific lectin. Shows agglutinating activity towards erythrocytes from rabbit. The protein is Mannose-specific lectin 2 of Colocasia esculenta (Wild taro).